Consider the following 81-residue polypeptide: Putative membrane protein insertion efficiency factor (81 aa).

The tract at residues 61-81 (NDGGFDPVPPAPSSRTSSIAE) is disordered.

It belongs to the UPF0161 family.

It localises to the cell inner membrane. Functionally, could be involved in insertion of integral membrane proteins into the membrane. The polypeptide is Putative membrane protein insertion efficiency factor (Pseudomonas putida (strain ATCC 700007 / DSM 6899 / JCM 31910 / BCRC 17059 / LMG 24140 / F1)).